The chain runs to 92 residues: UPF0250 protein Pmen_3793 (92 aa).

Belongs to the UPF0250 family.

The sequence is that of UPF0250 protein Pmen_3793 from Ectopseudomonas mendocina (strain ymp) (Pseudomonas mendocina).